We begin with the raw amino-acid sequence, 268 residues long: Homeobox protein CDX-1 (268 aa).

Positions 1–152 (MYVGYVLDKD…AGGGGSGKTR (152 aa)) are disordered. Composition is skewed to pro residues over residues 29–42 (TYAP…PPQY) and 54–67 (APAP…PFPA). Residues 73-91 (AAAYGPGPTASAASPAPLA) show a composition bias toward low complexity. Residues 92–108 (FGPPPDFSPVPAPPGPG) show a composition bias toward pro residues. Over residues 115–128 (SLGAPGAPSSPGAP) the composition is skewed to low complexity. The segment at residues 154-213 (KDKYRVVYTDHQRLELEKEFHYSRYITIRRKSELAANLGLTERQVKIWFQNRRAKERKVN) is a DNA-binding region (homeobox). Residues 157 to 178 (YRVVYTDHQRLELEKEFHYSRY) are interaction with DNA. Residues 196-207 (RQVKIWFQNRRA) form an interaction with 5-mCpG DNA region. Residues 209 to 268 (ERKVNKKKQQQQQPLPPTQLPLPLDGTPTPSGPPLGSLCPTNAGLLGTPSPVPVKEEFLP) form a disordered region. Low complexity predominate over residues 229-246 (PLPLDGTPTPSGPPLGSL).

It belongs to the Caudal homeobox family. As to expression, intestinal epithelium.

The protein localises to the nucleus. Its function is as follows. Plays a role in transcriptional regulation. Involved in activated KRAS-mediated transcriptional activation of PRKD1 in colorectal cancer (CRC) cells. Binds to the PRKD1 promoter in colorectal cancer (CRC) cells. Could play a role in the terminal differentiation of the intestine. Binds preferentially to methylated DNA. The polypeptide is Homeobox protein CDX-1 (Cdx1) (Mus musculus (Mouse)).